Consider the following 58-residue polypeptide: Sperm protamine P1 (58 aa).

The tract at residues 1 to 58 is disordered; sequence MARYRRRSRSRSRSRYGRRRRRSRSRRRRSRRRRRRRGRRGRGYHRRSPHRRRRRRRR.

The protein belongs to the protamine P1 family. Testis.

The protein localises to the nucleus. It localises to the chromosome. Its function is as follows. Protamines substitute for histones in the chromatin of sperm during the haploid phase of spermatogenesis. They compact sperm DNA into a highly condensed, stable and inactive complex. This Monodelphis domestica (Gray short-tailed opossum) protein is Sperm protamine P1 (PRM1).